The chain runs to 1128 residues: Major DNA-binding protein (1128 aa).

A required for nuclear localization region spans residues Leu1104–Val1128.

It belongs to the herpesviridae major DNA-binding protein family. As to quaternary structure, homooligomers. Forms double-helical filaments necessary for the formation of replication compartments within the host nucleus. Interacts with the origin-binding protein. Interacts with the helicase primase complex; this interaction stimulates primer synthesis activity of the helicase-primase complex. Interacts with the DNA polymerase. Interacts with the alkaline exonuclease; this interaction increases its nuclease processivity.

The protein localises to the virion tegument. Its subcellular location is the host nucleus. Functionally, plays several crucial roles in viral infection. Participates in the opening of the viral DNA origin to initiate replication by interacting with the origin-binding protein. May disrupt loops, hairpins and other secondary structures present on ssDNA to reduce and eliminate pausing of viral DNA polymerase at specific sites during elongation. Promotes viral DNA recombination by performing strand-transfer, characterized by the ability to transfer a DNA strand from a linear duplex to a complementary single-stranded DNA circle. Can also catalyze the renaturation of complementary single strands. Additionally, reorganizes the host cell nucleus, leading to the formation of prereplicative sites and replication compartments. This process is driven by the protein which can form double-helical filaments in the absence of DNA. This Homo sapiens (Human) protein is Major DNA-binding protein.